Consider the following 508-residue polypeptide: Cytochrome P450 4A12B (508 aa).

Residues 1-37 (MSASALSSIRFPGSISEYLQVASVLSLLLLLFKTAQL) form the signal peptide. The heme site is built by Glu319 and Cys455.

It belongs to the cytochrome P450 family. Requires heme as cofactor. Expressed in lung, but almost undetectable in the kidneys of five different strains.

It is found in the endoplasmic reticulum membrane. It localises to the microsome membrane. It catalyses the reaction an organic molecule + reduced [NADPH--hemoprotein reductase] + O2 = an alcohol + oxidized [NADPH--hemoprotein reductase] + H2O + H(+). The enzyme catalyses dodecanoate + reduced [NADPH--hemoprotein reductase] + O2 = 11-hydroxydodecanoate + oxidized [NADPH--hemoprotein reductase] + H2O + H(+). The catalysed reaction is dodecanoate + reduced [NADPH--hemoprotein reductase] + O2 = 12-hydroxydodecanoate + oxidized [NADPH--hemoprotein reductase] + H2O + H(+). It carries out the reaction (5Z,8Z,11Z,14Z)-eicosatetraenoate + reduced [NADPH--hemoprotein reductase] + O2 = 18-hydroxy-(5Z,8Z,11Z,14Z)-eicosatetraenoate + oxidized [NADPH--hemoprotein reductase] + H2O + H(+). It catalyses the reaction (5Z,8Z,11Z,14Z)-eicosatetraenoate + reduced [NADPH--hemoprotein reductase] + O2 = 19-hydroxy-(5Z,8Z,11Z,14Z)-eicosatetraenoate + oxidized [NADPH--hemoprotein reductase] + H2O + H(+). The enzyme catalyses (5Z,8Z,11Z,14Z)-eicosatetraenoate + reduced [NADPH--hemoprotein reductase] + O2 = 20-hydroxy-(5Z,8Z,11Z,14Z)-eicosatetraenoate + oxidized [NADPH--hemoprotein reductase] + H2O + H(+). The catalysed reaction is (5Z,8Z,11Z,14Z,17Z)-eicosapentaenoate + reduced [NADPH--hemoprotein reductase] + O2 = 19-hydroxy-(5Z,8Z,11Z,14Z,17Z)-eicosapentaenoate + oxidized [NADPH--hemoprotein reductase] + H2O + H(+). It carries out the reaction (5Z,8Z,11Z,14Z,17Z)-eicosapentaenoate + reduced [NADPH--hemoprotein reductase] + O2 = 20-hydroxy-(5Z,8Z,11Z,14Z,17Z)-eicosapentaenoate + oxidized [NADPH--hemoprotein reductase] + H2O + H(+). It catalyses the reaction (5Z,8Z,11Z,14Z,17Z)-eicosapentaenoate + reduced [NADPH--hemoprotein reductase] + O2 = (17S,18R)-epoxy-(5Z,8Z,11Z,14Z)-eicosatetraenoate + oxidized [NADPH--hemoprotein reductase] + H2O + H(+). The enzyme catalyses (5Z,8Z,11Z,14Z,17Z)-eicosapentaenoate + reduced [NADPH--hemoprotein reductase] + O2 = (17R,18S)-epoxy-(5Z,8Z,11Z,14Z)-eicosatetraenoate + oxidized [NADPH--hemoprotein reductase] + H2O + H(+). It participates in lipid metabolism; fatty acid metabolism. With respect to regulation, activated by cytochrome b5. The Vmax almost doubles in the presence of cytochrome b5. Functionally, a cytochrome P450 monooxygenase involved in the metabolism of fatty acids and their oxygenated derivatives (oxylipins). Mechanistically, uses molecular oxygen inserting one oxygen atom into a substrate, and reducing the second into a water molecule, with two electrons provided by NADPH via cytochrome P450 reductase (CPR; NADPH-ferrihemoprotein reductase). Catalyzes predominantly the oxidation of the terminal carbon (omega-oxidation) of saturated and unsaturated fatty acids. May act as a major omega-hydroxylase for dodecanoic (lauric) acid in kidney. Participates in omega-hydroxylation of (5Z,8Z,11Z,14Z)-eicosatetraenoic acid (arachidonate) to 20-hydroxyeicosatetraenoic acid (20-HETE), a signaling molecule acting both as vasoconstrictive and natriuretic with overall effect on arterial blood pressure. Acts as an omega-hydroxylase and epoxidase toward (5Z,8Z,11Z,14Z,17Z)-eicosapentaenoc acid (EPA). Catalyzes the epoxidation of the last double bond of EPA with no preferred stereoselectivity, producing both (R,S) and (S,R) stereoisomers. Can also catalyze the omega-1 and omega-2 oxidation of fatty acids with lower efficiency. The protein is Cytochrome P450 4A12B of Mus musculus (Mouse).